Consider the following 401-residue polypeptide: Carbamoyl phosphate synthase small chain (401 aa).

Residues 1 to 203 (MTETAPWTTR…KGYGTLGEAD (203 aa)) form a CPSase region. Residues Ser56, Gly255, and Gly257 each contribute to the L-glutamine site. In terms of domain architecture, Glutamine amidotransferase type-1 spans 207 to 395 (HVVCVDFGVK…VNLLRENKGE (189 aa)). The active-site Nucleophile is the Cys284. L-glutamine contacts are provided by Leu285, Gln288, Asn326, Gly328, and Phe329. Active-site residues include His368 and Glu370.

The protein belongs to the CarA family. In terms of assembly, composed of two chains; the small (or glutamine) chain promotes the hydrolysis of glutamine to ammonia, which is used by the large (or ammonia) chain to synthesize carbamoyl phosphate. Tetramer of heterodimers (alpha,beta)4.

It catalyses the reaction hydrogencarbonate + L-glutamine + 2 ATP + H2O = carbamoyl phosphate + L-glutamate + 2 ADP + phosphate + 2 H(+). The enzyme catalyses L-glutamine + H2O = L-glutamate + NH4(+). Its pathway is amino-acid biosynthesis; L-arginine biosynthesis; carbamoyl phosphate from bicarbonate: step 1/1. It participates in pyrimidine metabolism; UMP biosynthesis via de novo pathway; (S)-dihydroorotate from bicarbonate: step 1/3. Functionally, small subunit of the glutamine-dependent carbamoyl phosphate synthetase (CPSase). CPSase catalyzes the formation of carbamoyl phosphate from the ammonia moiety of glutamine, carbonate, and phosphate donated by ATP, constituting the first step of 2 biosynthetic pathways, one leading to arginine and/or urea and the other to pyrimidine nucleotides. The small subunit (glutamine amidotransferase) binds and cleaves glutamine to supply the large subunit with the substrate ammonia. In Agrobacterium fabrum (strain C58 / ATCC 33970) (Agrobacterium tumefaciens (strain C58)), this protein is Carbamoyl phosphate synthase small chain.